A 321-amino-acid chain; its full sequence is MAAATRSCRPWGSLLGLIWLVSAAAASWDLSSLRCNFGSFCECDFQPDFQGLECDLAQHLAGQHLARSLVVKALKAFLQDPAPTKPLVLSLHGWTGTGKSYVSSLLAHYLFRDGLRSPHVHHFSPVIHFPHPSHLERYKKDLKSWVQGNLTVCSRSLFLFDEMDKLAPGLIEVLRPFLGSSWVVYGTNYRKAIFIFISNTGGEQINQVVLEAWRSRREREEIGLQELGPVISQAVLDNPHHGFWRSGIMEEHLLDVLVPFLPLQRHHVRHCVLNELAHLGLEPRDEVVQAVLDSTIFFPEDEPLFSSNGCKMVASRIAFFL.

Positions 1-26 (MAAATRSCRPWGSLLGLIWLVSAAAA) are cleaved as a signal peptide. ATP is bound at residue 93–100 (GWTGTGKS). Asparagine 149 is a glycosylation site (N-linked (GlcNAc...) asparagine).

Belongs to the ClpA/ClpB family. Torsin subfamily. As to quaternary structure, homohexamer. Interacts with TOR1AIP1.

It localises to the endoplasmic reticulum lumen. In Bos taurus (Bovine), this protein is Torsin-2A (TOR2A).